The following is a 103-amino-acid chain: Glutaredoxin-C11 (103 aa).

The Glutaredoxin domain occupies 1–102 (MERIRDLSSK…QMLKDAKAIW (102 aa)). A disulfide bridge links cysteine 21 with cysteine 24.

This sequence belongs to the glutaredoxin family. CC-type subfamily.

It localises to the cytoplasm. Its function is as follows. Has a glutathione-disulfide oxidoreductase activity in the presence of NADPH and glutathione reductase. Reduces low molecular weight disulfides and proteins. The protein is Glutaredoxin-C11 (GRXC11) of Arabidopsis thaliana (Mouse-ear cress).